The sequence spans 78 residues: uncharacterized protein (78 aa).

Positions 1–78 (MSSNSNTDHS…VDLEGPKDEQ (78 aa)) are disordered. Composition is skewed to basic and acidic residues over residues 10-33 (STGD…ETES) and 63-78 (LNLK…KDEQ).

This is an uncharacterized protein from Schizosaccharomyces pombe (strain 972 / ATCC 24843) (Fission yeast).